The primary structure comprises 369 residues: H-2 class I histocompatibility antigen, K-B alpha chain (369 aa).

Residues 1 to 21 form the signal peptide; the sequence is MVPCTLLLLLAAALAPTQTRA. The alpha-1 stretch occupies residues 22-111; sequence GPHSLRYFVT…LLGYYNQSKG (90 aa). The Extracellular portion of the chain corresponds to 22-305; the sequence is GPHSLRYFVT…EPPPSTVSNM (284 aa). Residue N107 is glycosylated (N-linked (GlcNAc...) asparagine). The segment at 112 to 203 is alpha-2; sequence GSHTIQVISG…KNGNATLLRT (92 aa). A disulfide bridge links C122 with C185. N-linked (GlcNAc...) asparagine glycosylation occurs at N197. An alpha-3 region spans residues 204-295; that stretch reads DSPKAHVTHH…GLPEPLTLRW (92 aa). One can recognise an Ig-like C1-type domain in the interval 206 to 294; that stretch reads PKAHVTHHSR…QGLPEPLTLR (89 aa). Cysteines 224 and 280 form a disulfide. The interval 296–305 is connecting peptide; it reads EPPPSTVSNM. The chain crosses the membrane as a helical span at residues 306-328; it reads ATVAVLVVLGAAIVTGAVVAFVM. Residues 329 to 369 lie on the Cytoplasmic side of the membrane; sequence KMRRRNTGGKGGDYALAPGSQTSDLSLPDCKVMVHDPHSLA. Phosphoserine occurs at positions 351 and 354.

The protein belongs to the MHC class I family. Heterodimer of an alpha chain and a beta chain (beta-2-microglobulin).

It is found in the membrane. In terms of biological role, involved in the presentation of foreign antigens to the immune system. This chain is H-2 class I histocompatibility antigen, K-B alpha chain (H2-K1), found in Mus musculus (Mouse).